A 466-amino-acid polypeptide reads, in one-letter code: Triplex capsid protein 1 (466 aa).

Residues 1–29 are disordered; sequence MKTKPLPTAPMAWAESAVETTTGPRELAG.

This sequence belongs to the herpesviridae TRX1 protein family. Interacts with TRX2, MCP and capsid vertex component 2/CVC2.

Its subcellular location is the virion. The protein resides in the host nucleus. In terms of biological role, structural component of the T=16 icosahedral capsid. The capsid is composed of pentamers and hexamers of major capsid protein/MCP, which are linked together by heterotrimers called triplexes. These triplexes are formed by a single molecule of triplex protein 1/TRX1 and two copies of triplex protein 2/TRX2. Additionally, TRX1 is required for efficient transport of TRX2 to the nucleus, which is the site of capsid assembly. The sequence is that of Triplex capsid protein 1 from Homo sapiens (Human).